A 402-amino-acid polypeptide reads, in one-letter code: Acetate kinase (402 aa).

N10 is a binding site for Mg(2+). Residue K17 coordinates ATP. R89 provides a ligand contact to substrate. The active-site Proton donor/acceptor is the D148. ATP-binding positions include 208–212, 283–285, and 334–338; these read HLGNG, DCR, and GIGEN. Mg(2+) is bound at residue E389.

This sequence belongs to the acetokinase family. As to quaternary structure, homodimer. Mg(2+) serves as cofactor. Mn(2+) is required as a cofactor.

It is found in the cytoplasm. The enzyme catalyses acetate + ATP = acetyl phosphate + ADP. It functions in the pathway metabolic intermediate biosynthesis; acetyl-CoA biosynthesis; acetyl-CoA from acetate: step 1/2. Catalyzes the formation of acetyl phosphate from acetate and ATP. Can also catalyze the reverse reaction. The chain is Acetate kinase from Actinobacillus pleuropneumoniae serotype 5b (strain L20).